Reading from the N-terminus, the 77-residue chain is Defensin-like protein (77 aa).

A signal peptide spans 1–30 (MERGMRLFSSLVLVLLLVTATEMGPKVAEA). 4 disulfides stabilise this stretch: Cys33-Cys77, Cys44-Cys64, Cys50-Cys71, and Cys54-Cys73.

The protein belongs to the DEFL family.

It is found in the secreted. The protein is Defensin-like protein of Nelumbo nucifera (Sacred lotus).